The primary structure comprises 100 residues: RNA-binding protein YlxQ (100 aa).

It belongs to the eukaryotic ribosomal protein eL8 family.

Its function is as follows. RNA-binding protein that recognizes the K-turn motif present in ribosomal RNA, but also in box C/D and box C'/D' sRNAs. In Bacillus subtilis (strain 168), this protein is RNA-binding protein YlxQ.